The following is a 636-amino-acid chain: Iron transport multicopper oxidase FET3 (636 aa).

An N-terminal signal peptide occupies residues Met-1–Ala-21. Over Glu-22–Lys-559 the chain is Extracellular. Residues Asn-27, Asn-74, and Asn-77 are each glycosylated (N-linked (GlcNAc...) asparagine). Plastocyanin-like domains are found at residues Trp-32–Asp-146 and Ser-157–Lys-301. His-81 and His-83 together coordinate Cu cation. Residues Asn-88 and Asn-113 are each glycosylated (N-linked (GlcNAc...) asparagine). Residues His-126 and His-128 each contribute to the Cu cation site. N-linked (GlcNAc...) asparagine glycans are attached at residues Asn-194, Asn-198, Asn-244, Asn-265, Asn-292, Asn-300, Asn-359, and Asn-381. The Plastocyanin-like 3 domain occupies Tyr-362 to Pro-502. Cu cation is bound by residues His-413, His-416, His-418, His-483, Cys-484, His-485, and His-489. Residues Gly-560 to Met-584 form a helical membrane-spanning segment. At Asp-585–Phe-636 the chain is on the cytoplasmic side.

The protein belongs to the multicopper oxidase family. It depends on Cu cation as a cofactor.

It is found in the cell membrane. The enzyme catalyses 4 Fe(2+) + O2 + 4 H(+) = 4 Fe(3+) + 2 H2O. It carries out the reaction 4 Cu(+) + O2 + 4 H(+) = 4 Cu(2+) + 2 H2O. Its function is as follows. Iron transport multicopper ferroxidase required for Fe(2+) ion high affinity uptake. Required to oxidize Fe(2+) to Fe(3+), which is then transported into the cell via the ferric iron permease FTR1. Essential component of copper-dependent iron transport. Also has cuprous oxidase activity. The chain is Iron transport multicopper oxidase FET3 (FET3) from Saccharomyces cerevisiae (strain ATCC 204508 / S288c) (Baker's yeast).